The sequence spans 216 residues: Ribose-5-phosphate isomerase A (216 aa).

Substrate-binding positions include 26 to 29 (TGST), 79 to 82 (DGAD), and 92 to 95 (KGGG). Glu-101 functions as the Proton acceptor in the catalytic mechanism. Lys-119 contributes to the substrate binding site.

This sequence belongs to the ribose 5-phosphate isomerase family. Homodimer.

The enzyme catalyses aldehydo-D-ribose 5-phosphate = D-ribulose 5-phosphate. It functions in the pathway carbohydrate degradation; pentose phosphate pathway; D-ribose 5-phosphate from D-ribulose 5-phosphate (non-oxidative stage): step 1/1. Catalyzes the reversible conversion of ribose-5-phosphate to ribulose 5-phosphate. The chain is Ribose-5-phosphate isomerase A from Legionella pneumophila (strain Lens).